Reading from the N-terminus, the 326-residue chain is High-affinity zinc uptake system protein ZnuA (326 aa).

The first 22 residues, 1 to 22 (MIRPSSLVLAAALGTAALPARA), serve as a signal peptide directing secretion. His59 lines the Zn(2+) pocket. Positions 117–155 (GGEHEHEHEHEHEHEHEHEHDGHGHAEEQAHHDHDHSGT) are enriched in basic and acidic residues. The tract at residues 117–161 (GGEHEHEHEHEHEHEHEHEHDGHGHAEEQAHHDHDHSGTDPHAWL) is disordered. Zn(2+)-binding residues include His158, His222, and Asp295. An intrachain disulfide couples Cys267 to Cys322.

This sequence belongs to the bacterial solute-binding protein 9 family. As to quaternary structure, monomer.

It is found in the periplasm. Functionally, part of the ATP-binding cassette (ABC) transport system ZnuABC involved in zinc import. Binds zinc with high affinity and specificity and delivers it to the membrane permease for translocation into the cytoplasm. The chain is High-affinity zinc uptake system protein ZnuA from Paracoccus denitrificans (strain Pd 1222).